The following is a 523-amino-acid chain: 2-isopropylmalate synthase (523 aa).

The 263-residue stretch at 5 to 267 (VIIFDTTLRD…ETGINAKEIH (263 aa)) folds into the Pyruvate carboxyltransferase domain. Residues Asp14, His202, His204, and Asn238 each contribute to the Mn(2+) site. The interval 392–523 (KLQQLVVHSD…QQEKQVLGGV (132 aa)) is regulatory domain.

The protein belongs to the alpha-IPM synthase/homocitrate synthase family. LeuA type 1 subfamily. As to quaternary structure, homodimer. Requires Mn(2+) as cofactor.

It is found in the cytoplasm. The enzyme catalyses 3-methyl-2-oxobutanoate + acetyl-CoA + H2O = (2S)-2-isopropylmalate + CoA + H(+). It functions in the pathway amino-acid biosynthesis; L-leucine biosynthesis; L-leucine from 3-methyl-2-oxobutanoate: step 1/4. Catalyzes the condensation of the acetyl group of acetyl-CoA with 3-methyl-2-oxobutanoate (2-ketoisovalerate) to form 3-carboxy-3-hydroxy-4-methylpentanoate (2-isopropylmalate). In Shewanella piezotolerans (strain WP3 / JCM 13877), this protein is 2-isopropylmalate synthase.